A 145-amino-acid chain; its full sequence is Large ribosomal subunit protein uL15 (145 aa).

Composition is skewed to basic residues over residues 1–13 (MVRERTKKLRGGH) and 19–29 (KAGRGKGKKGG). The segment at 1–33 (MVRERTKKLRGGHYGRGMKAGRGKGKKGGRGNA) is disordered.

The protein belongs to the universal ribosomal protein uL15 family. In terms of assembly, part of the 50S ribosomal subunit.

Its function is as follows. Binds to the 23S rRNA. In Thermoplasma volcanium (strain ATCC 51530 / DSM 4299 / JCM 9571 / NBRC 15438 / GSS1), this protein is Large ribosomal subunit protein uL15.